The sequence spans 259 residues: UPF0246 protein NGO_0461 (259 aa).

This sequence belongs to the UPF0246 family.

This chain is UPF0246 protein NGO_0461, found in Neisseria gonorrhoeae (strain ATCC 700825 / FA 1090).